Consider the following 339-residue polypeptide: F420-dependent glucose-6-phosphate dehydrogenase (339 aa).

Aspartate 41 contacts coenzyme F420-(gamma-Glu)n. The active-site Proton donor is the histidine 42. Coenzyme F420-(gamma-Glu)n-binding positions include threonine 78 and 109–110 (TG). The active-site Proton acceptor is glutamate 111. Coenzyme F420-(gamma-Glu)n is bound by residues asparagine 114, 177 to 178 (SG), and 180 to 181 (AA). Substrate contacts are provided by threonine 195, lysine 198, lysine 259, and arginine 283.

It belongs to the F420-dependent glucose-6-phosphate dehydrogenase family. In terms of assembly, homodimer.

It catalyses the reaction oxidized coenzyme F420-(gamma-L-Glu)(n) + D-glucose 6-phosphate + H(+) = 6-phospho-D-glucono-1,5-lactone + reduced coenzyme F420-(gamma-L-Glu)(n). Its function is as follows. Catalyzes the coenzyme F420-dependent oxidation of glucose 6-phosphate (G6P) to 6-phosphogluconolactone. This is F420-dependent glucose-6-phosphate dehydrogenase from Nakamurella multipartita (strain ATCC 700099 / DSM 44233 / CIP 104796 / JCM 9543 / NBRC 105858 / Y-104) (Microsphaera multipartita).